The following is a 346-amino-acid chain: Phosphoribosylformylglycinamidine cyclo-ligase (346 aa).

Belongs to the AIR synthase family.

The protein resides in the cytoplasm. The catalysed reaction is 2-formamido-N(1)-(5-O-phospho-beta-D-ribosyl)acetamidine + ATP = 5-amino-1-(5-phospho-beta-D-ribosyl)imidazole + ADP + phosphate + H(+). Its pathway is purine metabolism; IMP biosynthesis via de novo pathway; 5-amino-1-(5-phospho-D-ribosyl)imidazole from N(2)-formyl-N(1)-(5-phospho-D-ribosyl)glycinamide: step 2/2. The protein is Phosphoribosylformylglycinamidine cyclo-ligase of Photobacterium profundum (strain SS9).